The following is a 267-amino-acid chain: Hydroxypyruvate/pyruvate aldolase Bphyt_5830 (267 aa).

H48 serves as the catalytic Proton acceptor. Residues E152 and D178 each coordinate a divalent metal cation.

Belongs to the HpcH/HpaI aldolase family. The cofactor is a divalent metal cation.

The catalysed reaction is D-glyceraldehyde + 3-hydroxypyruvate = 2-dehydro-D-galactonate. It catalyses the reaction D-glyceraldehyde + 3-hydroxypyruvate = (3R,4S,5R)-3,4,5,6-tetrahydroxy-2-oxohexanoate. It carries out the reaction D-glyceraldehyde + pyruvate = 2-dehydro-3-deoxy-L-galactonate. Aldolase which can catalyze in vitro the aldolisation reaction between hydroxypyruvate (HPA) or pyruvate (PA) and D-glyceraldehyde (D-GA). The condensation of hydroxypyruvate and D-glyceraldehyde produces 2-dehydro-D-galactonate as the major product and (3R,4S,5R)-3,4,5,6-tetrahydroxy-2-oxohexanoate. The condensation of pyruvate and D-glyceraldehyde produces 2-dehydro-3-deoxy-L-galactonate. This chain is Hydroxypyruvate/pyruvate aldolase Bphyt_5830, found in Paraburkholderia phytofirmans (strain DSM 17436 / LMG 22146 / PsJN) (Burkholderia phytofirmans).